The primary structure comprises 903 residues: Zinc finger CCCH domain-containing protein 27 (903 aa).

Residues 1–144 (MIKESSSPAL…GRNGAPWAQH (144 aa)) form a disordered region. Over residues 11–24 (DADKIEVPSPKDEN) the composition is skewed to basic and acidic residues. Acidic residues predominate over residues 33–46 (TDNEDFEISDDDDD). Positions 86-96 (SHGEAQKDFFP) are enriched in basic and acidic residues. The C3H1-type zinc finger occupies 225–253 (GMPRQRCRDFEERGFCLRGDMCPMEHGLN). Residues 390 to 456 (ASKKLGHGKT…GRQSNRASHK (67 aa)) form a disordered region. A compositionally biased stretch (low complexity) spans 397 to 410 (GKTANATSTSATGN). Polar residues predominate over residues 432 to 441 (KDSNGQSNSR). Residues 459 to 531 (RTLYVNGIPL…RFIKLWWANR (73 aa)) enclose the RRM domain. 3 disordered regions span residues 545–609 (KSSH…DTKR), 642–720 (KQKG…QTSP), and 826–903 (TNHS…DVSQ). Over residues 556–576 (SVPQPSSSNRGKENLQSATPR) the composition is skewed to polar residues. The segment covering 577-587 (ASSGSSAEASG) has biased composition (low complexity). Residues 608–649 (KRQESLELLEELRKKQEILAQKRDEFRRQLEKLAKQKGLANS) are a coiled coil. Positions 693-708 (SGELASSSHKSSATSA) are enriched in low complexity. Residues 826–886 (TNHSRFQKTS…SMPTATSAKT (61 aa)) show a composition bias toward polar residues.

The chain is Zinc finger CCCH domain-containing protein 27 from Oryza sativa subsp. japonica (Rice).